Here is a 365-residue protein sequence, read N- to C-terminus: Chorismate synthase (365 aa).

NADP(+) contacts are provided by arginine 48 and arginine 54. Residues 125-127, 237-238, glycine 277, 292-296, and arginine 318 each bind FMN; these read RSS, NA, and KPTSS.

Belongs to the chorismate synthase family. Homotetramer. Requires FMNH2 as cofactor.

The catalysed reaction is 5-O-(1-carboxyvinyl)-3-phosphoshikimate = chorismate + phosphate. It functions in the pathway metabolic intermediate biosynthesis; chorismate biosynthesis; chorismate from D-erythrose 4-phosphate and phosphoenolpyruvate: step 7/7. Its function is as follows. Catalyzes the anti-1,4-elimination of the C-3 phosphate and the C-6 proR hydrogen from 5-enolpyruvylshikimate-3-phosphate (EPSP) to yield chorismate, which is the branch point compound that serves as the starting substrate for the three terminal pathways of aromatic amino acid biosynthesis. This reaction introduces a second double bond into the aromatic ring system. The sequence is that of Chorismate synthase from Polaromonas naphthalenivorans (strain CJ2).